The chain runs to 224 residues: PKHD-type hydroxylase tll1907 (224 aa).

The Fe2OG dioxygenase domain maps to 77 to 176; that stretch reads KIIGPLLFSR…RLVAVAWVQS (100 aa). Residues histidine 96, aspartate 98, and histidine 157 each contribute to the Fe cation site. Position 167 (arginine 167) interacts with 2-oxoglutarate.

The cofactor is Fe(2+). L-ascorbate serves as cofactor.

The polypeptide is PKHD-type hydroxylase tll1907 (Thermosynechococcus vestitus (strain NIES-2133 / IAM M-273 / BP-1)).